Reading from the N-terminus, the 74-residue chain is Putative protein YozX (74 aa).

This chain is Putative protein YozX (yozX), found in Bacillus subtilis (strain 168).